The sequence spans 1302 residues: Vascular endothelial growth factor receptor kdr-like (1302 aa).

An N-terminal signal peptide occupies residues methionine 1–glycine 28. The Extracellular segment spans residues serine 29–valine 740. 7 consecutive Ig-like C2-type domains span residues proline 34–serine 115, aspartate 143–alanine 206, lysine 222–isoleucine 318, asparagine 326–lysine 412, proline 419–aspartate 542, proline 545–threonine 636, and proline 643–threonine 728. Cystine bridges form between cysteine 55–cysteine 104 and cysteine 150–cysteine 199. 2 N-linked (GlcNAc...) asparagine glycosylation sites follow: asparagine 69 and asparagine 97. Residues asparagine 242, asparagine 265, asparagine 291, asparagine 326, asparagine 370, asparagine 380, asparagine 408, asparagine 453, asparagine 466, asparagine 505, asparagine 517, asparagine 532, asparagine 607, asparagine 611, asparagine 630, asparagine 648, and asparagine 655 are each glycosylated (N-linked (GlcNAc...) asparagine). Cysteine 243 and cysteine 302 are oxidised to a cystine. An intrachain disulfide couples cysteine 444 to cysteine 524. The cysteines at positions 565 and 618 are disulfide-linked. A disulfide bridge connects residues cysteine 664 and cysteine 712. Residues isoleucine 741–isoleucine 761 form a helical membrane-spanning segment. At arginine 762–valine 1302 the chain is on the cytoplasmic side. One can recognise a Protein kinase domain in the interval leucine 809–leucine 1139. ATP-binding positions include leucine 815–valine 823 and lysine 843. Aspartate 1003 (proton acceptor) is an active-site residue. A phosphotyrosine; by autocatalysis mark is found at tyrosine 1029, tyrosine 1034, and tyrosine 1150. 2 disordered regions span residues threonine 1159–leucine 1179 and proline 1266–asparagine 1292. The segment covering aspartate 1162 to proline 1176 has biased composition (polar residues).

This sequence belongs to the protein kinase superfamily. Tyr protein kinase family. CSF-1/PDGF receptor subfamily. In terms of assembly, interacts with isoform VEGF165 of vegfaa and isoform VEGF171 of vegfab. Phosphorylated and activated by vegfaa and vegfab. First expressed in embryos between 5- and 7-somites. At 7 somites, expressed in discrete bilateral stripes both anteriorly and posteriorly, and in a transverse ectodermal stripe in the hindbrain. From 7-somites, expression seems to extend caudally from the head, and in both directions in the trunk region, until by 20-somites, expression is detected as a continuous band from the anterior head region to the tailbud. Concurrently, cells expressing kdrl in the mid- and posterior trunk regions converge medially. By 24 hours post-fertilization (hpf), expressed in all the endothelial cells lining the vasculature.

The protein resides in the cell membrane. It catalyses the reaction L-tyrosyl-[protein] + ATP = O-phospho-L-tyrosyl-[protein] + ADP + H(+). Its function is as follows. Receptor for VEGF or VEGFC. Has a tyrosine-protein kinase activity. Combinations of multiple VEGF receptors are required for development of different blood vessel types in the embryo. Involved in angiogenesis, specifically in VEGF-induced sprouting of new blood vessels. Particularly involved in artery formation. Does not appear to be required for hematopoiesis. The polypeptide is Vascular endothelial growth factor receptor kdr-like (kdrl) (Danio rerio (Zebrafish)).